The following is a 374-amino-acid chain: Dihydroorotate dehydrogenase (quinone) (374 aa).

FMN-binding positions include Ala-78–Lys-82 and Thr-102. Residue Lys-82 coordinates substrate. Substrate is bound at residue Asn-127–Phe-131. Residues Asn-159 and Asn-192 each contribute to the FMN site. A substrate-binding site is contributed by Asn-192. Catalysis depends on Ser-195, which acts as the Nucleophile. Asn-197 provides a ligand contact to substrate. FMN contacts are provided by Lys-230 and Thr-258. Asn-259–Thr-260 is a substrate binding site. FMN is bound by residues Gly-287, Gly-316, and Tyr-337–Thr-338.

This sequence belongs to the dihydroorotate dehydrogenase family. Type 2 subfamily. As to quaternary structure, monomer. The cofactor is FMN.

It localises to the cell membrane. The catalysed reaction is (S)-dihydroorotate + a quinone = orotate + a quinol. It functions in the pathway pyrimidine metabolism; UMP biosynthesis via de novo pathway; orotate from (S)-dihydroorotate (quinone route): step 1/1. In terms of biological role, catalyzes the conversion of dihydroorotate to orotate with quinone as electron acceptor. This chain is Dihydroorotate dehydrogenase (quinone), found in Acaryochloris marina (strain MBIC 11017).